The sequence spans 1013 residues: Putative DNA polymerase 060R (1013 aa).

The protein belongs to the DNA polymerase type-B family.

The enzyme catalyses DNA(n) + a 2'-deoxyribonucleoside 5'-triphosphate = DNA(n+1) + diphosphate. Functionally, DNA-directed DNA polymerase involved in viral DNA replication. In Dryophytes versicolor (chameleon treefrog), this protein is Putative DNA polymerase 060R.